The following is a 197-amino-acid chain: Glycerol-3-phosphate acyltransferase (197 aa).

Transmembrane regions (helical) follow at residues 6–26, 58–78, 82–102, 116–136, and 157–177; these read LFIV…AIIV, AITL…AHYL, MLNV…PIFF, ALLA…VFVA, and FYLI…CLWI.

It belongs to the PlsY family. In terms of assembly, probably interacts with PlsX.

Its subcellular location is the cell inner membrane. It catalyses the reaction an acyl phosphate + sn-glycerol 3-phosphate = a 1-acyl-sn-glycero-3-phosphate + phosphate. It functions in the pathway lipid metabolism; phospholipid metabolism. Its function is as follows. Catalyzes the transfer of an acyl group from acyl-phosphate (acyl-PO(4)) to glycerol-3-phosphate (G3P) to form lysophosphatidic acid (LPA). This enzyme utilizes acyl-phosphate as fatty acyl donor, but not acyl-CoA or acyl-ACP. This Ruthia magnifica subsp. Calyptogena magnifica protein is Glycerol-3-phosphate acyltransferase.